The sequence spans 72 residues: MKTQNVLLSFGIVFLMISFSSETYIRDFITRRPPFGNIGKRSLKDVESLDFLFDPTFTAADLAVLENALEDY.

Positions 1 to 23 (MKTQNVLLSFGIVFLMISFSSET) are cleaved as a signal peptide. Residue isoleucine 38 is modified to Isoleucine amide. The propeptide occupies 42-72 (SLKDVESLDFLFDPTFTAADLAVLENALEDY).

It belongs to the non-disulfide-bridged peptide (NDBP) superfamily. Short antimicrobial peptide (group 4) family. As to expression, expressed by the venom gland.

It is found in the secreted. Functionally, antimicrobial peptide. The protein is Peptide Ctri9194 of Chaerilus tricostatus (Scorpion).